A 240-amino-acid polypeptide reads, in one-letter code: 4-hydroxy-tetrahydrodipicolinate reductase (240 aa).

NAD(+) contacts are provided by residues 79–81 and 103–106; these read ATT and SANM. His-135 acts as the Proton donor/acceptor in catalysis. His-136 contacts (S)-2,3,4,5-tetrahydrodipicolinate. The active-site Proton donor is the Lys-139. 145 to 146 is a binding site for (S)-2,3,4,5-tetrahydrodipicolinate; that stretch reads GT.

It belongs to the DapB family.

The protein localises to the cytoplasm. The catalysed reaction is (S)-2,3,4,5-tetrahydrodipicolinate + NAD(+) + H2O = (2S,4S)-4-hydroxy-2,3,4,5-tetrahydrodipicolinate + NADH + H(+). It catalyses the reaction (S)-2,3,4,5-tetrahydrodipicolinate + NADP(+) + H2O = (2S,4S)-4-hydroxy-2,3,4,5-tetrahydrodipicolinate + NADPH + H(+). It participates in amino-acid biosynthesis; L-lysine biosynthesis via DAP pathway; (S)-tetrahydrodipicolinate from L-aspartate: step 4/4. In terms of biological role, catalyzes the conversion of 4-hydroxy-tetrahydrodipicolinate (HTPA) to tetrahydrodipicolinate. In Staphylococcus aureus (strain Mu3 / ATCC 700698), this protein is 4-hydroxy-tetrahydrodipicolinate reductase.